The primary structure comprises 578 residues: Arginine--tRNA ligase (578 aa).

Positions 127-137 match the 'HIGH' region motif; sequence PNLAKEMHVGH.

It belongs to the class-I aminoacyl-tRNA synthetase family. Monomer.

The protein localises to the cytoplasm. The enzyme catalyses tRNA(Arg) + L-arginine + ATP = L-arginyl-tRNA(Arg) + AMP + diphosphate. In Pseudomonas fluorescens (strain SBW25), this protein is Arginine--tRNA ligase.